Here is a 334-residue protein sequence, read N- to C-terminus: Fructose-1,6-bisphosphatase class 1 (334 aa).

Residues E91, D113, L115, and D116 each coordinate Mg(2+). Substrate contacts are provided by residues 116–119 (DGSS), N208, and K274. E280 lines the Mg(2+) pocket.

It belongs to the FBPase class 1 family. As to quaternary structure, homotetramer. Mg(2+) serves as cofactor.

It localises to the cytoplasm. The catalysed reaction is beta-D-fructose 1,6-bisphosphate + H2O = beta-D-fructose 6-phosphate + phosphate. It functions in the pathway carbohydrate biosynthesis; gluconeogenesis. In Herminiimonas arsenicoxydans, this protein is Fructose-1,6-bisphosphatase class 1.